Here is a 692-residue protein sequence, read N- to C-terminus: Methionine--tRNA ligase (692 aa).

The short motif at 12-22 is the 'HIGH' region element; that stretch reads PYANGSFHIGH. Zn(2+) contacts are provided by cysteine 143, cysteine 146, cysteine 156, and cysteine 159. Positions 341 to 345 match the 'KMSKS' region motif; the sequence is KMSKS. Lysine 344 provides a ligand contact to ATP. Residues 586 to 692 enclose the tRNA-binding domain; it reads DFAKIDLRIA…PGAQPGMRVR (107 aa).

This sequence belongs to the class-I aminoacyl-tRNA synthetase family. MetG type 1 subfamily. Homodimer. Requires Zn(2+) as cofactor.

The protein resides in the cytoplasm. It catalyses the reaction tRNA(Met) + L-methionine + ATP = L-methionyl-tRNA(Met) + AMP + diphosphate. Functionally, is required not only for elongation of protein synthesis but also for the initiation of all mRNA translation through initiator tRNA(fMet) aminoacylation. This is Methionine--tRNA ligase from Bordetella parapertussis (strain 12822 / ATCC BAA-587 / NCTC 13253).